Reading from the N-terminus, the 154-residue chain is Superoxide dismutase [Cu-Zn] (154 aa).

Cu cation-binding residues include His47, His49, and His64. Cys58 and Cys147 are disulfide-bonded. Positions 64, 72, 81, and 84 each coordinate Zn(2+). His121 is a Cu cation binding site. A disordered region spans residues 122 to 143 (GGTDDLGKGGNEESLKTGNAGP). Basic and acidic residues predominate over residues 123–136 (GTDDLGKGGNEESL). Arg144 is a substrate binding site.

This sequence belongs to the Cu-Zn superoxide dismutase family. Homodimer. Requires Cu cation as cofactor. It depends on Zn(2+) as a cofactor.

It is found in the cytoplasm. It carries out the reaction 2 superoxide + 2 H(+) = H2O2 + O2. Its function is as follows. Destroys radicals which are normally produced within the cells and which are toxic to biological systems. This Cordyceps militaris (Caterpillar fungus) protein is Superoxide dismutase [Cu-Zn] (SOD1).